Here is a 193-residue protein sequence, read N- to C-terminus: Hypoxanthine/guanine phosphoribosyltransferase (193 aa).

It belongs to the purine/pyrimidine phosphoribosyltransferase family. Archaeal HPRT subfamily. Homodimer.

The protein resides in the cytoplasm. The catalysed reaction is IMP + diphosphate = hypoxanthine + 5-phospho-alpha-D-ribose 1-diphosphate. It carries out the reaction GMP + diphosphate = guanine + 5-phospho-alpha-D-ribose 1-diphosphate. Its pathway is purine metabolism; IMP biosynthesis via salvage pathway; IMP from hypoxanthine: step 1/1. Its function is as follows. Catalyzes a salvage reaction resulting in the formation of IMP that is energically less costly than de novo synthesis. Prefers hypoxanthine, has 66% activity with guanine while activity with adenine, xanthine, uracil, orotate, or cytosine is negligible. The chain is Hypoxanthine/guanine phosphoribosyltransferase from Methanothermobacter marburgensis (strain ATCC BAA-927 / DSM 2133 / JCM 14651 / NBRC 100331 / OCM 82 / Marburg) (Methanobacterium thermoautotrophicum).